Consider the following 239-residue polypeptide: EF-hand domain-containing protein D1 (239 aa).

Residues 1–18 (MASEELACKLERRLRREE) show a composition bias toward basic and acidic residues. Residues 1–53 (MASEELACKLERRLRREEAEESGPQLAPLGAPAPEPKPEPEPPARAPTASADA) form a disordered region. 2 consecutive EF-hand domains span residues 90–125 (RLIK…LGAP) and 126–161 (QTHL…AAAG). Asp-103, Asp-107, Glu-114, Asp-139, Asp-141, Asp-143, Lys-145, and Glu-150 together coordinate Ca(2+). Residue Ser-201 is modified to Phosphoserine.

The protein resides in the mitochondrion inner membrane. Acts as a calcium sensor for mitochondrial flash (mitoflash) activation, an event characterized by stochastic bursts of superoxide production. May play a role in neuronal differentiation. This Homo sapiens (Human) protein is EF-hand domain-containing protein D1 (EFHD1).